The primary structure comprises 202 residues: MDPQLPEPEPLIALIEALRRLPGVGVRSARRMAYHLLQHDLQGADMLGRALSGAVQHLRHCARCNSFTEDEVCATCANPKRDPGLLCIVETPADQNMIESSHGYRGLYYVLMGRIAPLEGVGPRELDFQRVIERACDGVVQEVILATNFTAEGETTAHFLGDALSERGLKVTRLARGVPAGSELEYVDAGTIAWALMERRST.

Residues 61–76 (CARCNSFTEDEVCATC) form a C4-type zinc finger. Positions 84–179 (GLLCIVETPA…KVTRLARGVP (96 aa)) constitute a Toprim domain.

It belongs to the RecR family.

Its function is as follows. May play a role in DNA repair. It seems to be involved in an RecBC-independent recombinational process of DNA repair. It may act with RecF and RecO. The polypeptide is Recombination protein RecR (Bordetella bronchiseptica (strain ATCC BAA-588 / NCTC 13252 / RB50) (Alcaligenes bronchisepticus)).